The sequence spans 147 residues: Phosphoribosyl-AMP cyclohydrolase (147 aa).

Asp-91 is a Mg(2+) binding site. Cys-92 lines the Zn(2+) pocket. Residues Asp-93 and Asp-95 each contribute to the Mg(2+) site. 2 residues coordinate Zn(2+): Cys-109 and Cys-116.

Belongs to the PRA-CH family. In terms of assembly, homodimer. It depends on Mg(2+) as a cofactor. Zn(2+) is required as a cofactor.

The protein localises to the cytoplasm. It catalyses the reaction 1-(5-phospho-beta-D-ribosyl)-5'-AMP + H2O = 1-(5-phospho-beta-D-ribosyl)-5-[(5-phospho-beta-D-ribosylamino)methylideneamino]imidazole-4-carboxamide. It participates in amino-acid biosynthesis; L-histidine biosynthesis; L-histidine from 5-phospho-alpha-D-ribose 1-diphosphate: step 3/9. Catalyzes the hydrolysis of the adenine ring of phosphoribosyl-AMP. In Rhodopseudomonas palustris (strain BisB18), this protein is Phosphoribosyl-AMP cyclohydrolase.